Consider the following 142-residue polypeptide: Hemoglobin subunit zeta (142 aa).

Serine 2 bears the N-acetylserine mark. Residues 2–142 form the Globin domain; sequence SLMKNERAII…LSSILTEKYR (141 aa). Threonine 29 is subject to Phosphothreonine. The residue at position 53 (serine 53) is a Phosphoserine. Histidine 59 contributes to the heme b binding site. A Phosphoserine modification is found at serine 73. Residue histidine 88 coordinates heme b.

This sequence belongs to the globin family. Heterotetramer of two zeta chains and beta-type chains.

The zeta chain is an alpha-type chain of mammalian embryonic hemoglobin. The protein is Hemoglobin subunit zeta (Hbz) of Mus musculus (Mouse).